We begin with the raw amino-acid sequence, 240 residues long: Ubiquinone biosynthesis O-methyltransferase (240 aa).

Residues arginine 44, glycine 64, aspartate 85, and methionine 129 each coordinate S-adenosyl-L-methionine.

This sequence belongs to the methyltransferase superfamily. UbiG/COQ3 family.

It carries out the reaction a 3-demethylubiquinol + S-adenosyl-L-methionine = a ubiquinol + S-adenosyl-L-homocysteine + H(+). The enzyme catalyses a 3-(all-trans-polyprenyl)benzene-1,2-diol + S-adenosyl-L-methionine = a 2-methoxy-6-(all-trans-polyprenyl)phenol + S-adenosyl-L-homocysteine + H(+). It participates in cofactor biosynthesis; ubiquinone biosynthesis. Its function is as follows. O-methyltransferase that catalyzes the 2 O-methylation steps in the ubiquinone biosynthetic pathway. This Photorhabdus laumondii subsp. laumondii (strain DSM 15139 / CIP 105565 / TT01) (Photorhabdus luminescens subsp. laumondii) protein is Ubiquinone biosynthesis O-methyltransferase.